A 903-amino-acid chain; its full sequence is Dual serine/threonine and tyrosine protein kinase (903 aa).

Positions Ala-382–Thr-414 form a coiled coil. One can recognise a Protein kinase domain in the interval Pro-627–Leu-881. ATP contacts are provided by residues Leu-633–Val-641 and Lys-656. Asp-752 functions as the Proton acceptor in the catalytic mechanism.

This sequence belongs to the protein kinase superfamily. Ser/Thr protein kinase family.

The protein resides in the cytoplasm. Its subcellular location is the cell membrane. It is found in the apical cell membrane. The protein localises to the basolateral cell membrane. It localises to the cell junction. It catalyses the reaction L-seryl-[protein] + ATP = O-phospho-L-seryl-[protein] + ADP + H(+). The catalysed reaction is L-threonyl-[protein] + ATP = O-phospho-L-threonyl-[protein] + ADP + H(+). It carries out the reaction L-tyrosyl-[protein] + ATP = O-phospho-L-tyrosyl-[protein] + ADP + H(+). Functionally, may act as a positive regulator of ERK phosphorylation downstream of fibroblast growth factor-receptor activation. May induce both caspase-dependent apoptosis and caspase-independent cell death. May play a role in the embryonic development. The sequence is that of Dual serine/threonine and tyrosine protein kinase from Pimephales promelas (Fathead minnow).